We begin with the raw amino-acid sequence, 633 residues long: Probable potassium transport system protein Kup 2 (633 aa).

The next 11 helical transmembrane spans lie at 59-79 (ISAI…ILIM), 110-130 (ILLV…LTPA), 145-165 (TALQ…LFLF), 173-193 (IGAL…AAGI), 219-239 (GFAS…AEAL), 256-276 (FGLV…LIIV), 287-307 (LLYP…ATVI), 345-365 (IYIP…VLGF), 374-394 (AYGV…FFVI), 402-422 (LLLS…FVSS), and 429-449 (EGGW…LTWV).

The protein belongs to the HAK/KUP transporter (TC 2.A.72) family.

Its subcellular location is the cell inner membrane. The enzyme catalyses K(+)(in) + H(+)(in) = K(+)(out) + H(+)(out). In terms of biological role, transport of potassium into the cell. Likely operates as a K(+):H(+) symporter. The protein is Probable potassium transport system protein Kup 2 of Cupriavidus necator (strain ATCC 17699 / DSM 428 / KCTC 22496 / NCIMB 10442 / H16 / Stanier 337) (Ralstonia eutropha).